A 42-amino-acid polypeptide reads, in one-letter code: uncharacterized protein (42 aa).

It localises to the plastid. Its subcellular location is the chloroplast. This is an uncharacterized protein from Diacronema lutheri (Unicellular marine alga).